The primary structure comprises 415 residues: Multidrug resistance protein MdtA (415 aa).

Residues 1 to 21 (MKGSYKSRWVIVIVVVIAAIA) form the signal peptide. Positions 31-47 (DSQSAAPGATKQAQQSP) are enriched in polar residues. Disordered stretches follow at residues 31-60 (DSQS…GPLA) and 392-415 (EAQS…GARS). Basic and acidic residues predominate over residues 399 to 415 (PEEKATSREYAKKGARS).

It belongs to the membrane fusion protein (MFP) (TC 8.A.1) family. In terms of assembly, part of a tripartite efflux system composed of MdtA, MdtB and MdtC.

It is found in the cell inner membrane. In terms of biological role, the MdtABC tripartite complex confers resistance against novobiocin and deoxycholate. The chain is Multidrug resistance protein MdtA from Escherichia coli O157:H7.